A 408-amino-acid polypeptide reads, in one-letter code: Phosphoglycerate kinase (408 aa).

Residues 22 to 24 (DIN), Arg39, 60 to 63 (HQSR), Arg117, and Arg157 contribute to the substrate site. Residues Glu332 and 358–361 (GGHT) contribute to the ATP site.

Belongs to the phosphoglycerate kinase family. In terms of assembly, monomer.

The protein resides in the cytoplasm. The catalysed reaction is (2R)-3-phosphoglycerate + ATP = (2R)-3-phospho-glyceroyl phosphate + ADP. It functions in the pathway carbohydrate degradation; glycolysis; pyruvate from D-glyceraldehyde 3-phosphate: step 2/5. The polypeptide is Phosphoglycerate kinase (pgk) (Thermoplasma acidophilum (strain ATCC 25905 / DSM 1728 / JCM 9062 / NBRC 15155 / AMRC-C165)).